The primary structure comprises 331 residues: UPF0194 membrane protein Ent638_1286 (331 aa).

The N-terminal stretch at 1–16 is a signal peptide; sequence MKKPVVVILAVVVLLA. Residues 107-208 are a coiled coil; the sequence is EEVAQAEAAV…LDLHDTTLIA (102 aa).

This sequence belongs to the UPF0194 family.

It is found in the periplasm. This chain is UPF0194 membrane protein Ent638_1286, found in Enterobacter sp. (strain 638).